Consider the following 688-residue polypeptide: Two-component response regulator ORR23 (688 aa).

Residues 25-140 enclose the Response regulatory domain; it reads RVLAVDDDPV…ELRNIWQHVI (116 aa). D76 carries the post-translational modification 4-aspartylphosphate. The interval 161–212 is disordered; the sequence is PPNADSDHVHGHVTCGSPDQSGRPSKKRKEYCSEEEDEGEVNTQDIDDPSAP. Residues 193–208 are compositionally biased toward acidic residues; the sequence is SEEEDEGEVNTQDIDD. Residues 211–270 constitute a DNA-binding region (myb-like GARP); the sequence is APKKPRVVWSVELHRKFVAAVNQLGIDKAVPKRILELMNVEKLTRENVASHLQKYRLYLK.

This sequence belongs to the ARR family. Type-B subfamily. Two-component system major event consists of a His-to-Asp phosphorelay between a sensor histidine kinase (HK) and a response regulator (RR). In plants, the His-to-Asp phosphorelay involves an additional intermediate named Histidine-containing phosphotransfer protein (HPt). This multistep phosphorelay consists of a His-Asp-His-Asp sequential transfer of a phosphate group between first a His and an Asp of the HK protein, followed by the transfer to a conserved His of the HPt protein and finally the transfer to an Asp in the receiver domain of the RR protein.

The protein resides in the nucleus. Transcriptional activator that binds specific DNA sequence. Functions as a response regulator involved in His-to-Asp phosphorelay signal transduction system. Phosphorylation of the Asp residue in the receiver domain activates the ability of the protein to promote the transcription of target genes. May directly activate some type-A response regulators in response to cytokinins. The chain is Two-component response regulator ORR23 from Oryza sativa subsp. japonica (Rice).